Consider the following 574-residue polypeptide: MANTPHGGVLKDLFARDLPRQSELEAEAQKLPALTLSERHLCDLELILNGGFSPLEGFLTEKDYNGVVENNRLADGALFSMPINLDVNQAEIDQLGLKAGARVTLRDFRDDRNLAILTVEDIYRPDKVNEAKKVFGSDDDTHPGVKYLFDTAKEFYVGGKLEAINRLEHYDFLDLRFTPSELRAHFNKLGWQKVVAFQTRNPMHRAHRELTVRAARSQQANVLIQPVVGLTKPGDIDHFTRVRVYKALLPRYPNGMAALALLPLAMRMGGPREALWHAIIRKNHGATHFIVGRDHAGPGKNKQGKDHYGPYDAQVLVQEHQEELGIKMVEFQAMIYLPDSDEYLPINEIPEGTRTLNISGTELRHRLRTGKDIPEWFSYPEVVKVLREENPLPAEKGFTVFMTGYQNSGKDQIARALQATLNQGGGRPVSMLLGENVRHELSPELGFTRKDRDLNIQRIAFVASELTKAGAAVIAAPIAPFEDARKAARDLVEKSGPFFLVHVATPLEYCEKTDRKGVYAAARNGEIKNFTGVDDPYEAPAKPDLVVDLEKQNVRSIVHQIVLLLESNGLLDRL.

Positions 1 to 170 (MANTPHGGVL…LEAINRLEHY (170 aa)) are N-terminal. A catalytic region spans residues 171–395 (DFLDLRFTPS…LREENPLPAE (225 aa)). Q198 serves as a coordination point for sulfate. Residues 198–201 (QTRN) and 292–295 (GRDH) each bind ATP. Residues T199, R200, and N201 contribute to the active site. R200 is a binding site for sulfate. A296 contacts sulfate. M334 provides a ligand contact to ATP. The segment at 396–574 (KGFTVFMTGY…LESNGLLDRL (179 aa)) is allosteric regulation domain; adenylyl-sulfate kinase-like. 3'-phosphoadenylyl sulfate contacts are provided by residues 435-438 (ENVR), R452, 478-479 (IA), and K516.

The protein in the N-terminal section; belongs to the sulfate adenylyltransferase family. In the C-terminal section; belongs to the APS kinase family. As to quaternary structure, homohexamer. Dimer of trimers.

The protein resides in the cytoplasm. The catalysed reaction is sulfate + ATP + H(+) = adenosine 5'-phosphosulfate + diphosphate. Its pathway is sulfur metabolism; hydrogen sulfide biosynthesis; sulfite from sulfate: step 1/3. Its activity is regulated as follows. Allosterically inhibited by 3'-phosphoadenosine 5'-phosphosulfate (PAPS). Functionally, catalyzes the first intracellular reaction of sulfate assimilation, forming adenosine-5'-phosphosulfate (APS) from inorganic sulfate and ATP. Plays an important role in sulfate activation as a component of the biosynthesis pathway of sulfur-containing amino acids. This is Sulfate adenylyltransferase from Gibberella zeae (strain ATCC MYA-4620 / CBS 123657 / FGSC 9075 / NRRL 31084 / PH-1) (Wheat head blight fungus).